Here is a 240-residue protein sequence, read N- to C-terminus: Phosphatidylserine decarboxylase proenzyme (240 aa).

Catalysis depends on serine 205, which acts as the Schiff-base intermediate with substrate; via pyruvic acid. Residue serine 205 is modified to Pyruvic acid (Ser); by autocatalysis.

Belongs to the phosphatidylserine decarboxylase family. PSD-A subfamily. Heterodimer of a large membrane-associated beta subunit and a small pyruvoyl-containing alpha subunit. It depends on pyruvate as a cofactor. In terms of processing, is synthesized initially as an inactive proenzyme. Formation of the active enzyme involves a self-maturation process in which the active site pyruvoyl group is generated from an internal serine residue via an autocatalytic post-translational modification. Two non-identical subunits are generated from the proenzyme in this reaction, and the pyruvate is formed at the N-terminus of the alpha chain, which is derived from the carboxyl end of the proenzyme. The post-translation cleavage follows an unusual pathway, termed non-hydrolytic serinolysis, in which the side chain hydroxyl group of the serine supplies its oxygen atom to form the C-terminus of the beta chain, while the remainder of the serine residue undergoes an oxidative deamination to produce ammonia and the pyruvoyl prosthetic group on the alpha chain.

Its subcellular location is the cell membrane. The enzyme catalyses a 1,2-diacyl-sn-glycero-3-phospho-L-serine + H(+) = a 1,2-diacyl-sn-glycero-3-phosphoethanolamine + CO2. Its pathway is phospholipid metabolism; phosphatidylethanolamine biosynthesis; phosphatidylethanolamine from CDP-diacylglycerol: step 2/2. Functionally, catalyzes the formation of phosphatidylethanolamine (PtdEtn) from phosphatidylserine (PtdSer). The sequence is that of Phosphatidylserine decarboxylase proenzyme from Rhodopirellula baltica (strain DSM 10527 / NCIMB 13988 / SH1).